The sequence spans 197 residues: ATP-dependent Clp protease proteolytic subunit (197 aa).

S98 serves as the catalytic Nucleophile. Residue H123 is part of the active site.

The protein belongs to the peptidase S14 family. In terms of assembly, fourteen ClpP subunits assemble into 2 heptameric rings which stack back to back to give a disk-like structure with a central cavity, resembling the structure of eukaryotic proteasomes.

It localises to the cytoplasm. The catalysed reaction is Hydrolysis of proteins to small peptides in the presence of ATP and magnesium. alpha-casein is the usual test substrate. In the absence of ATP, only oligopeptides shorter than five residues are hydrolyzed (such as succinyl-Leu-Tyr-|-NHMec, and Leu-Tyr-Leu-|-Tyr-Trp, in which cleavage of the -Tyr-|-Leu- and -Tyr-|-Trp bonds also occurs).. In terms of biological role, cleaves peptides in various proteins in a process that requires ATP hydrolysis. Has a chymotrypsin-like activity. Plays a major role in the degradation of misfolded proteins. This is ATP-dependent Clp protease proteolytic subunit from Enterococcus faecalis (strain ATCC 700802 / V583).